An 81-amino-acid chain; its full sequence is Elicitor peptide 4 (81 aa).

Positions methionine 1–arginine 54 are excised as a propeptide. Positions proline 57–phenylalanine 81 are disordered.

Belongs to the brassicaceae elicitor peptide family.

Elicitor of plant defense. This chain is Elicitor peptide 4 (PEP4), found in Arabidopsis thaliana (Mouse-ear cress).